The following is a 461-amino-acid chain: Acetylornithine aminotransferase, mitochondrial (461 aa).

The tract at residues 36-56 (YATASQLTHPDPTEDSPSGKM) is disordered. At Lys-312 the chain carries N6-(pyridoxal phosphate)lysine.

Belongs to the class-III pyridoxal-phosphate-dependent aminotransferase family. Requires pyridoxal 5'-phosphate as cofactor.

The protein localises to the mitochondrion matrix. It carries out the reaction N(2)-acetyl-L-ornithine + 2-oxoglutarate = N-acetyl-L-glutamate 5-semialdehyde + L-glutamate. Its pathway is amino-acid biosynthesis; L-arginine biosynthesis; N(2)-acetyl-L-ornithine from L-glutamate: step 4/4. In Neurospora crassa (strain ATCC 24698 / 74-OR23-1A / CBS 708.71 / DSM 1257 / FGSC 987), this protein is Acetylornithine aminotransferase, mitochondrial (arg-8).